The following is a 292-amino-acid chain: 4-hydroxy-tetrahydrodipicolinate synthase (292 aa).

Position 45 (Thr-45) interacts with pyruvate. The active-site Proton donor/acceptor is Tyr-133. Residue Lys-161 is the Schiff-base intermediate with substrate of the active site. Pyruvate is bound at residue Ile-203.

The protein belongs to the DapA family. Homodimer.

The protein localises to the cytoplasm. It carries out the reaction L-aspartate 4-semialdehyde + pyruvate = (2S,4S)-4-hydroxy-2,3,4,5-tetrahydrodipicolinate + H2O + H(+). The protein operates within amino-acid biosynthesis; L-lysine biosynthesis via DAP pathway; (S)-tetrahydrodipicolinate from L-aspartate: step 3/4. Functionally, catalyzes the condensation of (S)-aspartate-beta-semialdehyde [(S)-ASA] and pyruvate to 4-hydroxy-tetrahydrodipicolinate (HTPA). This chain is 4-hydroxy-tetrahydrodipicolinate synthase, found in Pseudomonas putida (strain W619).